Here is a 119-residue protein sequence, read N- to C-terminus: Large ribosomal subunit protein uL18 (119 aa).

Positions 1–25 (MITKIDKNKVRKKRHARVRSKISGT) are disordered. Over residues 9 to 20 (KVRKKRHARVRS) the composition is skewed to basic residues.

It belongs to the universal ribosomal protein uL18 family. In terms of assembly, part of the 50S ribosomal subunit; part of the 5S rRNA/L5/L18/L25 subcomplex. Contacts the 5S and 23S rRNAs.

Its function is as follows. This is one of the proteins that bind and probably mediate the attachment of the 5S RNA into the large ribosomal subunit, where it forms part of the central protuberance. This Listeria monocytogenes serotype 4b (strain CLIP80459) protein is Large ribosomal subunit protein uL18.